A 122-amino-acid polypeptide reads, in one-letter code: Large ribosomal subunit protein uL14 (122 aa).

The protein belongs to the universal ribosomal protein uL14 family. In terms of assembly, part of the 50S ribosomal subunit. Forms a cluster with proteins L3 and L19. In the 70S ribosome, L14 and L19 interact and together make contacts with the 16S rRNA in bridges B5 and B8.

Its function is as follows. Binds to 23S rRNA. Forms part of two intersubunit bridges in the 70S ribosome. In Nautilia profundicola (strain ATCC BAA-1463 / DSM 18972 / AmH), this protein is Large ribosomal subunit protein uL14.